The following is a 316-amino-acid chain: Pleckstrin homology domain-containing family F member 1 homolog (316 aa).

The region spanning 35-131 (VLVGEGVLTK…WMAHINKCVE (97 aa)) is the PH domain. An FYVE-type zinc finger spans residues 152-212 (DTDASVCMHC…VCDACYERLK (61 aa)). Zn(2+)-binding residues include Cys-158, Cys-161, Cys-175, Cys-178, Cys-183, Cys-186, Cys-204, and Cys-207. The interval 215-316 (PSSLGSGEDS…AAVATTGSHC (102 aa)) is disordered. Residues 244–253 (SNDEDSDEET) are compositionally biased toward acidic residues. The segment covering 279-292 (SSTITSPSSATTGS) has biased composition (low complexity). Positions 298–316 (VTPSVQSSPAAVATTGSHC) are enriched in polar residues.

In terms of assembly, interacts with Gdi (Rab GDP dissociation inhibitor). In ovaries, expressed both in the germ line cells and in the overlying somatic follicular epithelium.

Its subcellular location is the apical cell membrane. It localises to the endosome membrane. The protein resides in the cytoplasm. It is found in the cell cortex. Functionally, functions in the regulation of endosome morphology and late endosome formation. Has a role in controlling trafficking from early to late endosomes and from late endosomes to lysosomes. Important for localization of Gdi to the endosomal membranes. May function in controlling the activity of multiple regulators in the endocytic pathway, perhaps by positively controlling those involved in the early steps of endocytosis such as Rab5 and hrs, and negative regulating those involved in the late stages of endocytosis like car and VhaSFD. This is Pleckstrin homology domain-containing family F member 1 homolog from Drosophila melanogaster (Fruit fly).